Consider the following 884-residue polypeptide: DNA mismatch repair protein MutS (884 aa).

643 to 650 (GPNMGGKS) contacts ATP.

Belongs to the DNA mismatch repair MutS family.

Functionally, this protein is involved in the repair of mismatches in DNA. It is possible that it carries out the mismatch recognition step. This protein has a weak ATPase activity. The protein is DNA mismatch repair protein MutS of Methylobacillus flagellatus (strain ATCC 51484 / DSM 6875 / VKM B-1610 / KT).